A 248-amino-acid chain; its full sequence is UPF0736 protein BCB4264_A1231 (248 aa).

This sequence belongs to the UPF0736 family.

The protein is UPF0736 protein BCB4264_A1231 of Bacillus cereus (strain B4264).